Here is a 1048-residue protein sequence, read N- to C-terminus: Malignant fibrous histiocytoma-amplified sequence 1 homolog (1048 aa).

Ala2 is modified (N-acetylalanine). 13 LRR repeats span residues 60–81 (DIEV…LGSA), 84–105 (SLRV…VAEL), 108–129 (HLTE…VVSA), 132–153 (ELRK…LGAL), 155–176 (HLEE…FSCL), 178–199 (HLRT…LLQL), 201–222 (ALEE…ISAL), 224–246 (ALKI…CELA), 247–268 (SLES…FSRL), 270–292 (RLKM…LPLA), 293–314 (GLEE…IAGL), 316–337 (RLLT…IVEL), and 339–360 (GLEE…FGQL). Positions 60–360 (DIEVLNLGNN…AVLPDNFGQL (301 aa)) are required for interaction with PJA2. The interval 60 to 645 (DIEVLNLGNN…DKLLSVAEHR (586 aa)) is required for interaction with PPP2R2A. The 247-residue stretch at 399-645 (QPAVQPRLKL…DKLLSVAEHR (247 aa)) folds into the Roc domain. Lys597 carries the post-translational modification N6-acetyllysine.

In terms of assembly, interacts with RAF1. Interacts with HSPD1. Interacts with PPP2CA; retains PPP2CA into the cytoplasm and excludes it from the nucleus. Interacts with PPP2R2A; the interaction is direct. Interacts with PJA2. Ubiquitinated. Ubiquitination by PJA2 does not lead MFHAS1 to proteasomal degradation but positively regulates its function in polarization of macrophages.

It is found in the cytoplasm. Probable GTP-binding protein. Functions in innate immunity and more specifically the inflammatory response as a regulator of the Toll-like receptor TLR2 and TLR4 signaling pathways. Negatively regulates the part of the TLR4 signaling pathway that leads to the activation of the transcription factor AP-1. By retaining the phosphatase complex PP2A into the cytoplasm, prevents the dephosphorylation of the AP-1 subunit JUN which is required for proper activation of the transcription factor. Both inhibits and activates the TLR2-dependent signaling pathway. Positively regulates the TLR2 signaling pathway to activate specifically the downstream p38 and JNK MAP kinases and promote the polarization of macrophages toward the pro-inflammatory M1 phenotype. It may also play a role in the regulation of inflammation induced by high glucose through the PKB/AKT signaling pathway. Also involved in erythrocyte differentiation through activation of the ERK1/ERK2 signaling pathway. The protein is Malignant fibrous histiocytoma-amplified sequence 1 homolog of Mus musculus (Mouse).